A 186-amino-acid chain; its full sequence is UPF0301 protein Mmc1_0726 (186 aa).

This sequence belongs to the UPF0301 (AlgH) family.

The polypeptide is UPF0301 protein Mmc1_0726 (Magnetococcus marinus (strain ATCC BAA-1437 / JCM 17883 / MC-1)).